The chain runs to 252 residues: tRNA (guanine-N(1)-)-methyltransferase (252 aa).

S-adenosyl-L-methionine-binding positions include Gly113 and 133 to 138 (IGDYVL).

This sequence belongs to the RNA methyltransferase TrmD family. In terms of assembly, homodimer.

It is found in the cytoplasm. The catalysed reaction is guanosine(37) in tRNA + S-adenosyl-L-methionine = N(1)-methylguanosine(37) in tRNA + S-adenosyl-L-homocysteine + H(+). Functionally, specifically methylates guanosine-37 in various tRNAs. This Xanthomonas campestris pv. campestris (strain 8004) protein is tRNA (guanine-N(1)-)-methyltransferase.